A 617-amino-acid polypeptide reads, in one-letter code: Mitochondrial Rho GTPase 2 (617 aa).

Residues 1-590 (MKRDVRILLL…LNGSDMSSTS (590 aa)) are Cytoplasmic-facing. Residues 2 to 168 (KRDVRILLLG…FYYAQKAVLH (167 aa)) form the Miro 1 domain. Positions 16, 17, 18, and 19 each coordinate GTP. A Mg(2+)-binding site is contributed by T18. D57 serves as a coordination point for Mg(2+). GTP-binding residues include S59, N118, K119, D121, A149, and K150. EF-hand domains follow at residues 184–219 (QCVR…CFGN) and 304–339 (LGHQ…LPYM). 8 residues coordinate Ca(2+): D197, D199, D201, E208, D317, D319, D321, and E328. One can recognise a Miro 2 domain in the interval 416 to 578 (RTVFLCKVIG…YSKLTWAAMY (163 aa)). Residues G428, G430, K431, and T432 each coordinate GTP. Mg(2+)-binding residues include T432 and E474. GTP contacts are provided by K528 and D530. Residues 591-613 (FWLRVTLGATIAAMLGFALYRAF) traverse the membrane as a helical; Anchor for type IV membrane protein segment. Residues 614–617 (SRHK) are Mitochondrial intermembrane-facing.

It belongs to the mitochondrial Rho GTPase family. Homodimer.

Its subcellular location is the mitochondrion outer membrane. It carries out the reaction GTP + H2O = GDP + phosphate + H(+). The catalysed reaction is ATP + H2O = ADP + phosphate + H(+). The enzyme catalyses UTP + H2O = UDP + phosphate + H(+). Its function is as follows. Atypical mitochondrial nucleoside-triphosphatase (NTPase) involved in mitochondrial trafficking. Probably involved in control of anterograde transport of mitochondria and their subcellular distribution. Can hydrolyze GTP, ATP and UTP. This chain is Mitochondrial Rho GTPase 2 (rhot2), found in Danio rerio (Zebrafish).